A 168-amino-acid polypeptide reads, in one-letter code: NADH-quinone oxidoreductase subunit E 2 (168 aa).

Cys-77, Cys-82, Cys-118, and Cys-122 together coordinate [2Fe-2S] cluster.

The protein belongs to the complex I 24 kDa subunit family. Requires [2Fe-2S] cluster as cofactor.

The catalysed reaction is a quinone + NADH + 5 H(+)(in) = a quinol + NAD(+) + 4 H(+)(out). Its function is as follows. NDH-1 shuttles electrons from NADH, via FMN and iron-sulfur (Fe-S) centers, to quinones in the respiratory chain. The immediate electron acceptor for the enzyme in this species is believed to be ubiquinone. Couples the redox reaction to proton translocation (for every two electrons transferred, four hydrogen ions are translocated across the cytoplasmic membrane), and thus conserves the redox energy in a proton gradient. This chain is NADH-quinone oxidoreductase subunit E 2 (nuoE2), found in Rhizobium meliloti (strain 1021) (Ensifer meliloti).